The sequence spans 444 residues: Orexin receptor type 2 (444 aa).

Residues 1-10 show a composition bias toward basic and acidic residues; it reads MSGTKLEDSP. A disordered region spans residues 1-30; that stretch reads MSGTKLEDSPPCRNWSSAPELNETQEPFLN. Over 1 to 54 the chain is Extracellular; sequence MSGTKLEDSPPCRNWSSAPELNETQEPFLNPTDYDDEEFLRYLWREYLHPKEYE. Asn-14 and Asn-22 each carry an N-linked (GlcNAc...) asparagine glycan. The segment covering 14-27 has biased composition (polar residues); it reads NWSSAPELNETQEP. The interval 33–49 is required for response to orexin-A; that stretch reads DYDDEEFLRYLWREYLH. Residues 55 to 75 form a helical membrane-spanning segment; it reads WVLIAGYIIVFVVALVGNVLV. The Cytoplasmic segment spans residues 76–88; sequence CVAVWKNHHMRTV. Residues 89–110 form a helical membrane-spanning segment; that stretch reads TNYFIVNLSLADVLVTITCLPA. At 111 to 127 the chain is on the extracellular side; the sequence is TLVVDITETWFFGQSLC. Residues Cys-127 and Cys-210 are joined by a disulfide bond. Residues 128-150 form a helical membrane-spanning segment; that stretch reads KVIPYLQTVSVSVSVLTLSCIAL. Residues 151–170 lie on the Cytoplasmic side of the membrane; sequence DRWYAICHPLMFKSTAKRAR. Residues 171–191 traverse the membrane as a helical segment; the sequence is NSIVIIWIVSCIIMIPQAIVM. Residues 192–222 are Extracellular-facing; sequence ECSTMLPGLANKTTLFTVCDERWGGEIYPKM. N-linked (GlcNAc...) asparagine glycosylation occurs at Asn-202. Residues 223–243 traverse the membrane as a helical segment; that stretch reads YHICFFLVTYMAPLCLMVLAY. Over 244–304 the chain is Cytoplasmic; the sequence is LQIFRKLWCR…QIRARRKTAR (61 aa). The helical transmembrane segment at 305-326 threads the bilayer; sequence MLMVVLLVFAICYLPISILNVL. The Extracellular segment spans residues 327–342; the sequence is KRVFGMFTHTEDRETV. The chain crosses the membrane as a helical span at residues 343–366; sequence YAWFTFSHWLVYANSAANPIIYNF. At 367–444 the chain is on the cytoplasmic side; sequence LSGKFREEFK…ANGAGPLQNW (78 aa).

Belongs to the G-protein coupled receptor 1 family.

The protein resides in the cell membrane. Its function is as follows. Nonselective, high-affinity receptor for both orexin-A and orexin-B neuropeptides. Triggers an increase in cytoplasmic Ca(2+) levels in response to orexin-A binding. This is Orexin receptor type 2 (HCRTR2) from Canis lupus familiaris (Dog).